A 779-amino-acid polypeptide reads, in one-letter code: Endoribonuclease YSH1 (779 aa).

Residues His-68, His-70, Asp-72, His-73, His-163, and Asp-184 each contribute to the Zn(2+) site. The active-site Proton donor is the His-408. His-430 is a Zn(2+) binding site. Ser-517 bears the Phosphoserine; by ATM or ATR mark.

This sequence belongs to the metallo-beta-lactamase superfamily. RNA-metabolizing metallo-beta-lactamase-like family. CPSF2/YSH1 subfamily. Component of the cleavage and polyadenylation factor (CPF) complex, which is composed of at least PTI1, SYC1, SSU72, GLC7, MPE1, REF2, PFS2, PTA1, YSH1/BRR5, SWD2, CFT2/YDH1, YTH1, CFT1/YHH1, FIP1 and PAP1. Interacts with FIP1, PFS2, RNA14 and YTH1. Requires Zn(2+) as cofactor.

It is found in the nucleus. Functionally, component of the cleavage and polyadenylation factor (CPF) complex, which plays a key role in polyadenylation-dependent pre-mRNA 3'-end formation and cooperates with cleavage factors including the CFIA complex and NAB4/CFIB. Has endonuclease activity. This is Endoribonuclease YSH1 (YSH1) from Saccharomyces cerevisiae (strain ATCC 204508 / S288c) (Baker's yeast).